The sequence spans 612 residues: uncharacterized protein (612 aa).

Residues 6–32 (CLYCRRRKIKCDKNRPCHNCFVAKREC) constitute a DNA-binding region (zn(2)-C6 fungal-type).

It is found in the cytoplasm. The protein resides in the nucleus. This is an uncharacterized protein from Schizosaccharomyces pombe (strain 972 / ATCC 24843) (Fission yeast).